Here is a 154-residue protein sequence, read N- to C-terminus: 6,7-dimethyl-8-ribityllumazine synthase (154 aa).

Residues Phe22, 56 to 58, and 80 to 82 each bind 5-amino-6-(D-ribitylamino)uracil; these read AFE and TVI. (2S)-2-hydroxy-3-oxobutyl phosphate is bound at residue 85 to 86; the sequence is AT. The active-site Proton donor is His88. Phe113 serves as a coordination point for 5-amino-6-(D-ribitylamino)uracil. Arg127 is a binding site for (2S)-2-hydroxy-3-oxobutyl phosphate.

The protein belongs to the DMRL synthase family. Forms an icosahedral capsid composed of 60 subunits, arranged as a dodecamer of pentamers.

The enzyme catalyses (2S)-2-hydroxy-3-oxobutyl phosphate + 5-amino-6-(D-ribitylamino)uracil = 6,7-dimethyl-8-(1-D-ribityl)lumazine + phosphate + 2 H2O + H(+). The protein operates within cofactor biosynthesis; riboflavin biosynthesis; riboflavin from 2-hydroxy-3-oxobutyl phosphate and 5-amino-6-(D-ribitylamino)uracil: step 1/2. Its function is as follows. Catalyzes the formation of 6,7-dimethyl-8-ribityllumazine by condensation of 5-amino-6-(D-ribitylamino)uracil with 3,4-dihydroxy-2-butanone 4-phosphate. This is the penultimate step in the biosynthesis of riboflavin. The chain is 6,7-dimethyl-8-ribityllumazine synthase from Bacillus pumilus (strain SAFR-032).